A 361-amino-acid chain; its full sequence is Zygote arrest protein 1 (361 aa).

Disordered regions lie at residues 68 to 129 (GPRP…PRSW) and 142 to 252 (GLSS…EQDK). Over residues 116 to 128 (PRSPARAGRPPRS) the composition is skewed to low complexity. Position 155 is a phosphothreonine (T155). Residues 238–252 (ASRDRASPQSTEQDK) are compositionally biased toward basic and acidic residues. The segment at 263-346 (KYGYYHCKDC…RQDLCGRCKD (84 aa)) adopts a 3CxxC-type zinc-finger fold.

Belongs to the ZAR1 family. Interacts with YBX2. Phosphorylation by CDK1 does not regulate formation of MARDO (mitochondria-associated ribonucleoprotein domain) membraneless compartment. In terms of processing, ubiquitinated and degradaded by the proteasome during oocyte meiotic maturation, leading to MARDO (mitochondria-associated ribonucleoprotein domain) membraneless compartment dissolution.

Its subcellular location is the cytoplasm. The protein localises to the cytoplasmic ribonucleoprotein granule. In terms of biological role, mRNA-binding protein that mediates formation of MARDO (mitochondria-associated ribonucleoprotein domain), a membraneless compartment that stores maternal mRNAs in oocytes. MARDO assembly around mitochondria is directed by an increase in mitochondrial membrane potential during oocyte growth. Promotes formation of MARDO phase-separated membraneless compartment by undergoing liquid-liquid phase separation upon binding to maternal mRNAs. Binds to the 3'-UTR of maternal mRNAs. Maternal mRNAs stored in the MARDO are translationally repressed. Essential for female fertility and oocyte-to-embryo transition by coordinating maternal mRNA storage, translation and degradation. This is Zygote arrest protein 1 from Rattus norvegicus (Rat).